Reading from the N-terminus, the 315-residue chain is Porphobilinogen deaminase (315 aa).

Cys-234 is modified (S-(dipyrrolylmethanemethyl)cysteine).

Belongs to the HMBS family. Monomer. It depends on dipyrromethane as a cofactor.

The catalysed reaction is 4 porphobilinogen + H2O = hydroxymethylbilane + 4 NH4(+). The protein operates within porphyrin-containing compound metabolism; protoporphyrin-IX biosynthesis; coproporphyrinogen-III from 5-aminolevulinate: step 2/4. Its function is as follows. Tetrapolymerization of the monopyrrole PBG into the hydroxymethylbilane pre-uroporphyrinogen in several discrete steps. The protein is Porphobilinogen deaminase (hemC) of Mycobacterium leprae (strain TN).